The primary structure comprises 117 residues: Toxin CSTX-12 (117 aa).

The signal sequence occupies residues 1–20; that stretch reads MKVLVICAVLFLTIFSNSSA. Positions 21–47 are excised as a propeptide; sequence ETEDDFLEDESFEADDVIPFLAREQVR. 4 cysteine pairs are disulfide-bonded: Cys-50/Cys-65, Cys-57/Cys-74, Cys-64/Cys-95, and Cys-76/Cys-93. The propeptide occupies 82–87; that stretch reads RSDTAR. An Alanine amide modification is found at Ala-116.

It belongs to the neurotoxin 19 (CSTX) family. 12 subfamily. In terms of assembly, heterodimer of A and B chains; disulfide-linked. Interacts with CSTX-1 (AC P81694), and with CSTX-9 (AC P58604). In terms of tissue distribution, expressed by the venom gland.

Its subcellular location is the secreted. The protein localises to the target cell membrane. Synergistic toxin that induces or increases a cytolytic effect when combined with CSTX-1 (AC P81694) or CSTX-9 (AC P58604). When alone, has a weak insecticidal activity, with an unknown molecular target. The protein is Toxin CSTX-12 of Cupiennius salei (American wandering spider).